Here is a 1070-residue protein sequence, read N- to C-terminus: Phosphatidylinositol 4,5-bisphosphate 3-kinase catalytic subunit beta isoform (1070 aa).

In terms of domain architecture, PI3K-ABD spans Ser-26–Ser-115. Residues Gly-194–Glu-285 enclose the PI3K-RBD domain. At Ser-324 the chain carries Phosphoserine. The 170-residue stretch at Trp-327–Pro-496 folds into the C2 PI3K-type domain. Residues Lys-410–Lys-418 carry the Nuclear localization signal motif. Residues Ala-524–Gly-701 enclose the PIK helical domain. Residues Tyr-772–Trp-1053 enclose the PI3K/PI4K catalytic domain. Residues Tyr-778 to Lys-784 are G-loop. Positions Gly-916–Asn-924 are catalytic loop. The tract at residues His-935–Thr-961 is activation loop. Ser-1070 bears the Phosphoserine; by autocatalysis mark.

It belongs to the PI3/PI4-kinase family. In terms of assembly, heterodimer of a catalytic subunit PIK3CB and a p85 regulatory subunit (PIK3R1, PIK3R2 or PIK3R3). Interaction with PIK3R2 is required for nuclear localization and nuclear export. Part of a complex with PIK3R1 and PTEN. Binding to PTEN may antagonize the lipid kinase activity under normal growth conditions. Part of a complex involved in autophagosome formation composed of PIK3C3 and PIK3R4. Interacts with BECN1, ATG14 and RAB5A. Post-translationally, autophosphorylation at Ser-1070 negatively regulates the phosphatidylinositol-4,5-bisphosphate 3-kinase activity. Expressed ubiquitously.

It localises to the cytoplasm. The protein resides in the nucleus. The catalysed reaction is a 1,2-diacyl-sn-glycero-3-phospho-(1D-myo-inositol-4,5-bisphosphate) + ATP = a 1,2-diacyl-sn-glycero-3-phospho-(1D-myo-inositol-3,4,5-trisphosphate) + ADP + H(+). The enzyme catalyses 1-octadecanoyl-2-(5Z,8Z,11Z,14Z)-eicosatetraenoyl-sn-glycero-3-phospho-1D-myo-inositol 4,5-bisphosphate + ATP = 1-octadecanoyl-2-(5Z,8Z,11Z,14Z-eicosatetraenoyl)-sn-glycero-3-phospho-(1D-myo-inositol 3,4,5-triphosphate) + ADP + H(+). It carries out the reaction L-seryl-[protein] + ATP = O-phospho-L-seryl-[protein] + ADP + H(+). It functions in the pathway phospholipid metabolism; phosphatidylinositol phosphate biosynthesis. Functionally, phosphoinositide-3-kinase (PI3K) phosphorylates phosphatidylinositol derivatives at position 3 of the inositol ring to produce 3-phosphoinositides. Uses ATP and PtdIns(4,5)P2 (phosphatidylinositol 4,5-bisphosphate) to generate phosphatidylinositol 3,4,5-trisphosphate (PIP3). PIP3 plays a key role by recruiting PH domain-containing proteins to the membrane, including AKT1 and PDPK1, activating signaling cascades involved in cell growth, survival, proliferation, motility and morphology. Involved in the activation of AKT1 upon stimulation by G-protein coupled receptors (GPCRs) ligands such as CXCL12, sphingosine 1-phosphate, and lysophosphatidic acid. May also act downstream receptor tyrosine kinases. Required in different signaling pathways for stable platelet adhesion and aggregation. Plays a role in platelet activation signaling triggered by GPCRs, alpha-IIb/beta-3 integrins (ITGA2B/ ITGB3) and ITAM (immunoreceptor tyrosine-based activation motif)-bearing receptors such as GP6. Regulates the strength of adhesion of ITGA2B/ ITGB3 activated receptors necessary for the cellular transmission of contractile forces. Required for platelet aggregation induced by F2 (thrombin) and thromboxane A2 (TXA2). Has a role in cell survival. May have a role in cell migration. Involved in the early stage of autophagosome formation. Modulates the intracellular level of PtdIns3P (phosphatidylinositol 3-phosphate) and activates PIK3C3 kinase activity. May act as a scaffold, independently of its lipid kinase activity to positively regulate autophagy. May have a role in insulin signaling as scaffolding protein in which the lipid kinase activity is not required. May have a kinase-independent function in regulating cell proliferation and in clathrin-mediated endocytosis. Mediator of oncogenic signal in cell lines lacking PTEN. The lipid kinase activity is necessary for its role in oncogenic transformation. Required for the growth of ERBB2 and RAS driven tumors. Also has a protein kinase activity showing autophosphorylation. This chain is Phosphatidylinositol 4,5-bisphosphate 3-kinase catalytic subunit beta isoform (PIK3CB), found in Homo sapiens (Human).